We begin with the raw amino-acid sequence, 953 residues long: Serine-aspartate repeat-containing protein C (953 aa).

The first 50 residues, 1–50 (MNNKKTATNRKGMIPNRLNKFSIRKYSVGTASILVGTTLIFGLSGHEAKA), serve as a signal peptide directing secretion. A disordered region spans residues 51-160 (AEHTNGELNQ…AKNVSTTPKT (110 aa)). The interval 51–495 (AEHTNGELNQ…GSSTANGDQK (445 aa)) is ligand binding A region. Polar residues predominate over residues 56-71 (GELNQSKNETTAPSEN). Basic and acidic residues predominate over residues 72–83 (KTTEKVDSRQLK). Positions 84–114 (DNTQTATADQPKVTMSDSATVKETSSNMQSP) are enriched in polar residues. A compositionally biased stretch (low complexity) spans 115 to 132 (QNATASQSTTQTSNVTTN). A compositionally biased stretch (polar residues) spans 133 to 160 (DKSSTTYSNETDKSNLTQAKNVSTTPKT). CNA-B domains lie at 496–606 (KYNL…YKTP) and 607–717 (KYSL…EEET). The disordered stretch occupies residues 678 to 933 (TQTGTNTTED…NNSNNGTLFG (256 aa)). Composition is skewed to acidic residues over residues 685 to 695 (TEDDKDADGGE) and 712 to 892 (YYEE…DSDS). Residues 916–920 (LPETG) carry the LPXTG sorting signal motif. Residues 918–933 (ETGSENNNSNNGTLFG) are compositionally biased toward low complexity. Position 919 is a pentaglycyl murein peptidoglycan amidated threonine (threonine 919). A propeptide spans 920–953 (GSENNNSNNGTLFGGLFAALGSLLLFGRRKKQNK) (removed by sortase).

Belongs to the serine-aspartate repeat-containing protein (SDr) family. Homodimerizes; via N2-Domain. Interacts with host NRXN1; this interaction mediates bacterial attachment to host cells.

The protein localises to the secreted. Its subcellular location is the cell wall. Cell surface-associated calcium-binding protein which plays an important role in adhesion and pathogenesis. Mediates interactions with components of the extracellular matrix such as host NRXN1 to promote bacterial adhesion. The polypeptide is Serine-aspartate repeat-containing protein C (sdrC) (Staphylococcus aureus (strain Mu50 / ATCC 700699)).